A 314-amino-acid chain; its full sequence is Methionyl-tRNA formyltransferase (314 aa).

Residue 113-116 participates in (6S)-5,6,7,8-tetrahydrofolate binding; sequence SLLP.

The protein belongs to the Fmt family.

The catalysed reaction is L-methionyl-tRNA(fMet) + (6R)-10-formyltetrahydrofolate = N-formyl-L-methionyl-tRNA(fMet) + (6S)-5,6,7,8-tetrahydrofolate + H(+). In terms of biological role, attaches a formyl group to the free amino group of methionyl-tRNA(fMet). The formyl group appears to play a dual role in the initiator identity of N-formylmethionyl-tRNA by promoting its recognition by IF2 and preventing the misappropriation of this tRNA by the elongation apparatus. In Pseudomonas savastanoi pv. phaseolicola (strain 1448A / Race 6) (Pseudomonas syringae pv. phaseolicola (strain 1448A / Race 6)), this protein is Methionyl-tRNA formyltransferase.